A 70-amino-acid chain; its full sequence is Protease inhibitor HPI (70 aa).

Ala-2 bears the N-acetylalanine mark. Cys-5 carries the post-translational modification S-glutathionyl cysteine; alternate.

Belongs to the protease inhibitor I13 (potato type I serine protease inhibitor) family. In terms of assembly, monomer and homodimer; disulfide-linked. In terms of processing, occurs in 3 forms that differ in the modification of Cys-5, HPI-1 forms a homodimer through a disulfide bond, HPI-2a is modified by glutathionylation, and HPI-2b is covalently modified by addition of an unidentified adduct but not by a disulfide linkage.

Inhibitor of serine proteases, strongly inhibits subtilisin A and weakly inhibits trypsin. Does not inhibit chymotrypsin, papain, pepsin, pronase E, protease type XIII and thermolysin. HPI-1 inhibits subtilisin A with an Ki of 0.21 nM. HPI-2a inhibits subtilisin A with an Ki of 0.08 nM. HPI-2b inhibits subtilisin A with an Ki of 0.1 nM. The polypeptide is Protease inhibitor HPI (Hevea brasiliensis (Para rubber tree)).